The primary structure comprises 398 residues: DJ-1 protein homolog E (398 aa).

2 PfpI endopeptidase domains span residues 7-199 and 210-393; these read KSAL…ESLG and ASVL…TALG.

Belongs to the peptidase C56 family. In terms of assembly, homotrimer. In terms of tissue distribution, expressed in roots and cauline leaves.

Its function is as follows. May be involved in oxidative stress response. In Arabidopsis thaliana (Mouse-ear cress), this protein is DJ-1 protein homolog E (DJ1E).